A 398-amino-acid chain; its full sequence is 1-deoxy-D-xylulose 5-phosphate reductoisomerase (398 aa).

Residues Thr-14, Gly-15, Ser-16, Ile-17, Gln-42, and Asn-128 each contribute to the NADPH site. A 1-deoxy-D-xylulose 5-phosphate-binding site is contributed by Lys-129. Glu-130 contributes to the NADPH binding site. Asp-154 is a binding site for Mn(2+). 4 residues coordinate 1-deoxy-D-xylulose 5-phosphate: Ser-155, Glu-156, Ser-185, and His-208. A Mn(2+)-binding site is contributed by Glu-156. Gly-214 provides a ligand contact to NADPH. Residues Ser-221, Asn-226, Lys-227, and Glu-230 each contribute to the 1-deoxy-D-xylulose 5-phosphate site. Glu-230 contacts Mn(2+).

This sequence belongs to the DXR family. It depends on Mg(2+) as a cofactor. Mn(2+) is required as a cofactor.

It catalyses the reaction 2-C-methyl-D-erythritol 4-phosphate + NADP(+) = 1-deoxy-D-xylulose 5-phosphate + NADPH + H(+). It participates in isoprenoid biosynthesis; isopentenyl diphosphate biosynthesis via DXP pathway; isopentenyl diphosphate from 1-deoxy-D-xylulose 5-phosphate: step 1/6. Functionally, catalyzes the NADPH-dependent rearrangement and reduction of 1-deoxy-D-xylulose-5-phosphate (DXP) to 2-C-methyl-D-erythritol 4-phosphate (MEP). The polypeptide is 1-deoxy-D-xylulose 5-phosphate reductoisomerase (Dechloromonas aromatica (strain RCB)).